The following is a 148-amino-acid chain: Glyoxalase domain-containing protein 5 (148 aa).

The 121-residue stretch at R25 to Y145 folds into the VOC domain.

The protein belongs to the glyoxalase I family.

The polypeptide is Glyoxalase domain-containing protein 5 (Glod5) (Mus musculus (Mouse)).